The sequence spans 821 residues: Serine/threonine-protein kinase CTR1 (821 aa).

2 disordered regions span residues 1-76 (MEMP…LNNQ) and 481-502 (NPGG…PSAN). The span at 14–25 (SQFSDDQVSVSV) shows a compositional bias: low complexity. Residues 35-49 (SLSSENRSNHNSGNT) show a composition bias toward polar residues. Residues 551 to 809 (LNIKEKIGAG…TIMDLLRPLI (259 aa)) form the Protein kinase domain. ATP contacts are provided by residues 557–565 (IGAGSFGTV) and lysine 578. The active-site Proton acceptor is aspartate 676.

Belongs to the protein kinase superfamily. TKL Ser/Thr protein kinase family. RAF subfamily. As to quaternary structure, interacts with EIN2 (via C-terminus). As to expression, expressed in both seedlings and adult plants.

The enzyme catalyses L-seryl-[protein] + ATP = O-phospho-L-seryl-[protein] + ADP + H(+). The catalysed reaction is L-threonyl-[protein] + ATP = O-phospho-L-threonyl-[protein] + ADP + H(+). Its activity is regulated as follows. Kinase activity is inhibited by C24:1-ceramide during hypoxia (e.g. submergences). Acts as a negative regulator in the ethylene response pathway. Phosphorylates the cytosolic C-terminal domain of EIN2, preventing the signaling in the absence of ethylene. Interacts with C24:1-ceramide upon hypoxic conditions (e.g. submergences) to in turn regulate EIN2 endoplasmic reticulum (ER)-to-nucleus translocation and EIN3 stabilization. The polypeptide is Serine/threonine-protein kinase CTR1 (Arabidopsis thaliana (Mouse-ear cress)).